A 737-amino-acid polypeptide reads, in one-letter code: Ribosome-releasing factor 2, mitochondrial (737 aa).

A mitochondrion-targeting transit peptide spans 1-36; it reads MLCNRLHKAAFAARLRPRLPATVASCRQVHNSDGTI. Residues 39–318 form the tr-type G domain; it reads KRIRNIGILA…SVLNFLPAPS (280 aa). GTP contacts are provided by residues 48–55, 112–116, and 166–169; these read AHIDAGKT, DTPGH, and NKMD.

It belongs to the TRAFAC class translation factor GTPase superfamily. Classic translation factor GTPase family. EF-G/EF-2 subfamily.

The protein localises to the mitochondrion. Its function is as follows. Mitochondrial GTPase that mediates the disassembly of ribosomes from messenger RNA at the termination of mitochondrial protein biosynthesis. Not involved in the GTP-dependent ribosomal translocation step during translation elongation. The sequence is that of Ribosome-releasing factor 2, mitochondrial from Anopheles gambiae (African malaria mosquito).